A 250-amino-acid chain; its full sequence is Electron transfer flavoprotein subunit beta (250 aa).

It belongs to the ETF beta-subunit/FixA family. Heterodimer of an alpha and a beta subunit. It depends on FAD as a cofactor. AMP serves as cofactor.

Its subcellular location is the mitochondrion matrix. In terms of biological role, the electron transfer flavoprotein serves as a specific electron acceptor for several dehydrogenases, including five acyl-CoA dehydrogenases, glutaryl-CoA and sarcosine dehydrogenase. It transfers the electrons to the main mitochondrial respiratory chain via ETF-ubiquinone oxidoreductase (ETF dehydrogenase). The sequence is that of Electron transfer flavoprotein subunit beta (etfb) from Dictyostelium discoideum (Social amoeba).